A 362-amino-acid chain; its full sequence is Aminomethyltransferase (362 aa).

This sequence belongs to the GcvT family. As to quaternary structure, the glycine cleavage system is composed of four proteins: P, T, L and H.

It carries out the reaction N(6)-[(R)-S(8)-aminomethyldihydrolipoyl]-L-lysyl-[protein] + (6S)-5,6,7,8-tetrahydrofolate = N(6)-[(R)-dihydrolipoyl]-L-lysyl-[protein] + (6R)-5,10-methylene-5,6,7,8-tetrahydrofolate + NH4(+). Functionally, the glycine cleavage system catalyzes the degradation of glycine. This is Aminomethyltransferase from Listeria monocytogenes serotype 4b (strain F2365).